The sequence spans 249 residues: Chitooligosaccharide deacetylase (249 aa).

Histidine 61 and histidine 125 together coordinate Mg(2+).

This sequence belongs to the YdjC deacetylase family. ChbG subfamily. Homodimer. It depends on Mg(2+) as a cofactor.

The protein localises to the cytoplasm. It catalyses the reaction N,N'-diacetylchitobiose + H2O = N-acetyl-beta-D-glucosaminyl-(1-&gt;4)-D-glucosamine + acetate. The catalysed reaction is diacetylchitobiose-6'-phosphate + H2O = N'-monoacetylchitobiose-6'-phosphate + acetate. It participates in glycan degradation; chitin degradation. Its function is as follows. Involved in the degradation of chitin. ChbG is essential for growth on the acetylated chitooligosaccharides chitobiose and chitotriose but is dispensable for growth on cellobiose and chitosan dimer, the deacetylated form of chitobiose. Deacetylation of chitobiose-6-P and chitotriose-6-P is necessary for both the activation of the chb promoter by the regulatory protein ChbR and the hydrolysis of phosphorylated beta-glucosides by the phospho-beta-glucosidase ChbF. Catalyzes the removal of only one acetyl group from chitobiose-6-P to yield monoacetylchitobiose-6-P, the inducer of ChbR and the substrate of ChbF. The protein is Chitooligosaccharide deacetylase of Escherichia coli O17:K52:H18 (strain UMN026 / ExPEC).